A 96-amino-acid polypeptide reads, in one-letter code: Large ribosomal subunit protein bL21 (96 aa).

The protein belongs to the bacterial ribosomal protein bL21 family. As to quaternary structure, part of the 50S ribosomal subunit. Contacts protein L20.

This protein binds to 23S rRNA in the presence of protein L20. This is Large ribosomal subunit protein bL21 from Chlorobium chlorochromatii (strain CaD3).